Reading from the N-terminus, the 552-residue chain is MGKVNVAKLRYMSRDDFRVLTAVEMGMKNHEIVPGSLIASIASLKHGGCNKVLRELVKHKLIAWERTKTVQGYRLTNAGYDYLALKTLSSRQVVESVGNQMGVGKESDIYIVANEEGQQFALKLHRLGRTSFRNLKNKRDYHKHRHNVSWLYLSRLSAMKEFAYMKALYERKFPVPKPIDYNRHAVVMELINGYPLCQIHHVEDPASVYDEAMELIVKLANHGLIHGDFNEFNLILDESDHITMIDFPQMVSTSHPNAEWYFDRDVKCIKDFFMKRFSYESELFPTFKDIRREDTLDVEVSASGYTKEMQADDELLHPLGPDDKNIETKEGSEFSFSDGEVAEKAEVYGSENESERNCLEESEGCYCRSSGDPEQIKEDSLSEESADARSFEMTEFNQALEEIKGQVVENNSVTEFSEEKNRTENYNRQDGQRVQGGVPAGSDEYEDECPHLIALSSLNREFRPFRDEENVGAMNQYRTRTLSITSSGSAVSCSTIPPELVKQKVKRQLTKQQKSAVRRRLQKGEANIFTKQRRENMQNIKSSLEAASFWGE.

One can recognise a Protein kinase domain in the interval 97 to 272; the sequence is VGNQMGVGKE…DRDVKCIKDF (176 aa). Lysine 123 serves as a coordination point for ATP. Residue aspartate 228 is the Proton acceptor of the active site. Serine 332, serine 335, serine 337, serine 350, serine 362, serine 380, serine 382, serine 385, and serine 390 each carry phosphoserine. The Nuclear export signal motif lies at 399–408; the sequence is ALEEIKGQVV. A phosphoserine mark is found at serine 412, serine 417, and serine 442. Tyrosine 445 bears the Phosphotyrosine mark. Serine 548 is modified (phosphoserine).

Belongs to the protein kinase superfamily. RIO-type Ser/Thr kinase family. Associated with late 40S pre-ribosomal particles. Interacts with PLK1 (via its N-terminus). It depends on Mg(2+) as a cofactor. Autophosphorylated (in vitro). Phosphorylation at Ser-335, Ser-380, Ser-548 by PLK1 affects the timing of the metaphase-anaphase transition.

Its subcellular location is the cytoplasm. It catalyses the reaction L-seryl-[protein] + ATP = O-phospho-L-seryl-[protein] + ADP + H(+). It carries out the reaction L-threonyl-[protein] + ATP = O-phospho-L-threonyl-[protein] + ADP + H(+). In terms of biological role, serine/threonine-protein kinase involved in the final steps of cytoplasmic maturation of the 40S ribosomal subunit. Involved in export of the 40S pre-ribosome particles (pre-40S) from the nucleus to the cytoplasm. Its kinase activity is required for the release of NOB1, PNO1 and LTV1 from the late pre-40S and the processing of 18S-E pre-rRNA to the mature 18S rRNA. Regulates the timing of the metaphase-anaphase transition during mitotic progression, and its phosphorylation, most likely by PLK1, regulates this function. This is Serine/threonine-protein kinase RIO2 from Homo sapiens (Human).